A 578-amino-acid polypeptide reads, in one-letter code: E3 ubiquitin protein ligase RIN2 (578 aa).

The next 6 membrane-spanning stretches (helical) occupy residues 6-26 (LPVSVASTALSFVGLQVWTEL), 58-78 (FTIALLTNFVLNVYILLVLSL), 111-131 (LVIPPTIFQGVLWTVWLTVLC), 161-181 (VYSVLFLVLSVDMFWIKLSLM), 186-206 (IGSAVYLLLLFEPCSIAFETL), and 272-292 (YLHIWWLHGIAFHLVDAVLFL). Residues 337–379 (CAICREPMAKAKRLHCNHLFHLGCLRSWLDQGLNEVYSCPTCR) form an RING-type; atypical zinc finger. The span at 504–513 (QASTSSTTVP) shows a compositional bias: polar residues. The tract at residues 504 to 524 (QASTSSTTVPPGNGGRTGGLH) is disordered. Positions 538–578 (NILAMAETVREVMPHVPDEIIFQDLQRTNSVAVTVNNLLQM) constitute a CUE domain.

Interacts (via C-terminus) with RPM1 (via N-terminus).

Its subcellular location is the membrane. The enzyme catalyses S-ubiquitinyl-[E2 ubiquitin-conjugating enzyme]-L-cysteine + [acceptor protein]-L-lysine = [E2 ubiquitin-conjugating enzyme]-L-cysteine + N(6)-ubiquitinyl-[acceptor protein]-L-lysine.. It participates in protein modification; protein ubiquitination. E3 ubiquitin protein ligase that acts as a positive regulator of RPM1- and RPS2-dependent hypersensitive response (HR), in association with RIN3. Probably not required for RPM1 degradation during HR. The protein is E3 ubiquitin protein ligase RIN2 (RIN2) of Arabidopsis thaliana (Mouse-ear cress).